A 77-amino-acid polypeptide reads, in one-letter code: Envelope glycoprotein (77 aa).

Residues 1–24 (LERQKNQNWYEGWFNSSPWFTTLL) are Extracellular-facing. A helical membrane pass occupies residues 25–45 (STIAGPLLLLLLLLILGPCII). Residue C43 is the site of S-palmitoyl cysteine; by host attachment. The Cytoplasmic segment spans residues 46–77 (NRLVQFINNRVSAVKILVLRQKYQTLDNEDNL). The short motif at 68-71 (YQTL) is the YXXL motif; contains endocytosis signal element.

The mature envelope protein (Env) consists of a trimer of SU-TM heterodimers attached by noncovalent interactions or by a labile interchain disulfide bond. Specific enzymatic cleavages in vivo yield mature proteins. Envelope glycoproteins are synthesized as an inactive precursor that is N-glycosylated and processed likely by host cell furin or by a furin-like protease in the Golgi to yield the mature SU and TM proteins. The cleavage site between SU and TM requires the minimal sequence [KR]-X-[KR]-R. The R-peptide is released from the C-terminus of the cytoplasmic tail of the TM protein upon particle formation as a result of proteolytic cleavage by the viral protease. Cleavage of this peptide is required for TM to become fusogenic. In terms of processing, the transmembrane protein is palmitoylated. Post-translationally, the R-peptide is palmitoylated.

It localises to the virion membrane. The protein resides in the host cell membrane. The surface protein (SU) attaches the virus to the host cell by binding to its receptor. This interaction triggers the refolding of the transmembrane protein (TM) and is thought to activate its fusogenic potential by unmasking its fusion peptide. Fusion occurs at the host cell plasma membrane. In terms of biological role, the transmembrane protein (TM) acts as a class I viral fusion protein. Under the current model, the protein has at least 3 conformational states: pre-fusion native state, pre-hairpin intermediate state, and post-fusion hairpin state. During viral and target cell membrane fusion, the coiled coil regions (heptad repeats) assume a trimer-of-hairpins structure, positioning the fusion peptide in close proximity to the C-terminal region of the ectodomain. The formation of this structure appears to drive apposition and subsequent fusion of viral and target cell membranes. Membranes fusion leads to delivery of the nucleocapsid into the cytoplasm. This Woolly monkey sarcoma virus (WMSV) protein is Envelope glycoprotein (env).